A 336-amino-acid chain; its full sequence is Serpentine receptor class delta-51 (336 aa).

The next 7 membrane-spanning stretches (helical) occupy residues 14-34 (VYYS…LFIM), 48-68 (YLFN…FAQC), 93-113 (CFVT…SILL), 133-153 (ATTF…QLLT), 188-208 (AAII…LIAF), 237-257 (GLLI…SYFL), and 275-295 (IFGS…VLPY).

This sequence belongs to the nematode receptor-like protein srd family.

It is found in the membrane. The chain is Serpentine receptor class delta-51 (srd-51) from Caenorhabditis elegans.